Consider the following 603-residue polypeptide: MTDVPAVRIRNFCIIAHIDHGKSTLADRLLQATGTVEDRKMKEQFLDNMDLERERGITIKLQAARMNYTAKDGQQYVLNLIDTPGHVDFSYEVSRSLVACEGALLVVDASQGVEAQTLANVYLALENNLEIIPVLNKIDLPGAEPERVIGEIEEIIGLDCSGAILASAKEGLGIDEILEAVVERIPPPPNTINERLRALIFDSYYDSYRGVIVYFRVMDGTVRKGDRIHLMASGKEFEIDELGVLSPTQKQVEELHAGEVGYLGAAIRAVADARVGDTITLSKAKAESPLPGYAEANPMVYCGMFPIDADQFEDLREALEKLELNDAALHYEPETSSAMGFGFRCGFLGLLHMEIVQERLEREYNLDLIITAPSVVYKVITLKGEELYIDNPSRLPSPNDRQRIEEPYVQVEMITPETYVGSLMELSQNRRGIFKDMKYLAQGRTTLTYELPLAEVVTDFFDQMKSRSRGYASMEYHLIGYRENPLVKLDIMINGDPVDSLAMIVHRDKAYNVGRAMAEKLKELIPRHQFKVPIQASIGSKVIASEHIPALRKDVLAKCYGGDISRKKKLLQKQAKGKKRMKSVGTVDVPQEAFMAVLRLDQS.

Residues 7-189 (VRIRNFCIIA…AVVERIPPPP (183 aa)) enclose the tr-type G domain. Residues 19 to 24 (DHGKST) and 136 to 139 (NKID) contribute to the GTP site.

The protein belongs to the TRAFAC class translation factor GTPase superfamily. Classic translation factor GTPase family. LepA subfamily.

It localises to the cell inner membrane. The catalysed reaction is GTP + H2O = GDP + phosphate + H(+). Required for accurate and efficient protein synthesis under certain stress conditions. May act as a fidelity factor of the translation reaction, by catalyzing a one-codon backward translocation of tRNAs on improperly translocated ribosomes. Back-translocation proceeds from a post-translocation (POST) complex to a pre-translocation (PRE) complex, thus giving elongation factor G a second chance to translocate the tRNAs correctly. Binds to ribosomes in a GTP-dependent manner. The polypeptide is Elongation factor 4 (Nostoc punctiforme (strain ATCC 29133 / PCC 73102)).